We begin with the raw amino-acid sequence, 449 residues long: Secretin receptor (449 aa).

An N-terminal signal peptide occupies residues 1-25 (MLSTMRPRLSLLLLRLLLLTKAAHT). The Extracellular portion of the chain corresponds to 26–141 (VGVPPRLCDV…NERRHAYLLK (116 aa)). Disulfide bonds link Cys-46-Cys-75, Cys-66-Cys-107, and Cys-89-Cys-123. 4 N-linked (GlcNAc...) asparagine glycosylation sites follow: Asn-72, Asn-100, Asn-106, and Asn-128. The chain crosses the membrane as a helical span at residues 142 to 167 (LKVMYTVGYSSSLAMLLVALSILCSF). Residues 168–174 (RRLHCTR) are Cytoplasmic-facing. The helical transmembrane segment at 175 to 195 (NYIHMHLFVSFILRALSNFIK) threads the bilayer. Residues 196–216 (DAVLFSSDDVTYCDAHKVGCK) are Extracellular-facing. Cysteines 215 and 285 form a disulfide. Residues 217–239 (LVMIFFQYCIMANYAWLLVEGLY) traverse the membrane as a helical segment. Topologically, residues 240–254 (LHTLLAISFFSERKY) are cytoplasmic. Residues 255 to 276 (LQAFVLLGWGSPAIFVALWAIT) form a helical membrane-spanning segment. Residues 277-291 (RHFLENTGCWDINAN) lie on the Extracellular side of the membrane. The N-linked (GlcNAc...) asparagine glycan is linked to Asn-291. The helical transmembrane segment at 292–315 (ASVWWVIRGPVILSILINFIFFIN) threads the bilayer. Topologically, residues 316 to 340 (ILRILMRKLRTQETRGSETNHYKRL) are cytoplasmic. Residues 341–356 (AKSTLLLIPLFGIHYI) traverse the membrane as a helical segment. Residues 357 to 367 (VFAFSPEDAME) lie on the Extracellular side of the membrane. The helical transmembrane segment at 368–391 (VQLFFELALGSFQGLVVAVLYCFL) threads the bilayer. Residues 392–449 (NGEVQLEVQKKWRQWHLQEFPLRPVAFNNSFSNATNGPTHSTKASTEQSRSIPRASII) lie on the Cytoplasmic side of the membrane. Residues 425-442 (ATNGPTHSTKASTEQSRS) are compositionally biased toward polar residues. A disordered region spans residues 425–449 (ATNGPTHSTKASTEQSRSIPRASII).

The protein belongs to the G-protein coupled receptor 2 family. In terms of processing, phosphorylated on Ser and Thr residues at the cytoplasmic C-terminus by G protein-coupled receptor kinases (GRKs). Post-translationally, N-glycosylated. In terms of tissue distribution, in the brain, expressed in the central amygdala, hippocampus, area postrema, nucleus of the tractus solitary and cerebellum.

Its subcellular location is the cell membrane. It is found in the basolateral cell membrane. G protein-coupled receptor activated by secretin (SCT), which is involved in different processes such as regulation of the pH of the duodenal content, food intake and water homeostasis. Ligand binding causes a conformation change that triggers signaling via guanine nucleotide-binding proteins (G proteins) and activates cAMP-dependent pathway. Upon binding to secretin, regulates the pH of the duodenum by (1) inhibiting the secretion of gastric acid from the parietal cells of the stomach and (2) stimulating the production of bicarbonate (NaHCO(3)) from the ductal cells of the pancreas. In addition to regulating the pH of the duodenal content, plays a central role in diet induced thermogenesis: acts as a non-sympathetic brown fat (BAT) activator mediating prandial thermogenesis, which consequentially induces satiation. Mechanistically, secretin released by the gut after a meal binds to secretin receptor (SCTR) in brown adipocytes, activating brown fat thermogenesis by stimulating lipolysis, which is sensed in the brain and promotes satiation. Also able to stimulate lipolysis in white adipocytes. Also plays an important role in cellular osmoregulation by regulating renal water reabsorption. Also plays a role in the central nervous system: required for synaptic plasticity. This Rattus norvegicus (Rat) protein is Secretin receptor.